The following is a 193-amino-acid chain: Holliday junction branch migration complex subunit RuvA (193 aa).

Positions 1 to 64 are domain I; that stretch reads MIGRIAGVLL…EDAHLLYGFL (64 aa). The interval 65-139 is domain II; sequence TPQERSTFRE…GKLGADLGAM (75 aa). The flexible linker stretch occupies residues 139–143; the sequence is MAGAA. Positions 144–193 are domain III; sequence SQSDHASDILNALLALGYSEKEGLAAIKNVPAGTGVSEGIKLALKALSKA.

The protein belongs to the RuvA family. In terms of assembly, homotetramer. Forms an RuvA(8)-RuvB(12)-Holliday junction (HJ) complex. HJ DNA is sandwiched between 2 RuvA tetramers; dsDNA enters through RuvA and exits via RuvB. An RuvB hexamer assembles on each DNA strand where it exits the tetramer. Each RuvB hexamer is contacted by two RuvA subunits (via domain III) on 2 adjacent RuvB subunits; this complex drives branch migration. In the full resolvosome a probable DNA-RuvA(4)-RuvB(12)-RuvC(2) complex forms which resolves the HJ.

It is found in the cytoplasm. Its function is as follows. The RuvA-RuvB-RuvC complex processes Holliday junction (HJ) DNA during genetic recombination and DNA repair, while the RuvA-RuvB complex plays an important role in the rescue of blocked DNA replication forks via replication fork reversal (RFR). RuvA specifically binds to HJ cruciform DNA, conferring on it an open structure. The RuvB hexamer acts as an ATP-dependent pump, pulling dsDNA into and through the RuvAB complex. HJ branch migration allows RuvC to scan DNA until it finds its consensus sequence, where it cleaves and resolves the cruciform DNA. The protein is Holliday junction branch migration complex subunit RuvA of Paraburkholderia phymatum (strain DSM 17167 / CIP 108236 / LMG 21445 / STM815) (Burkholderia phymatum).